The chain runs to 577 residues: Hemagglutinin-neuraminidase (577 aa).

Residues 1-26 (MDRAVSQVALENDEREAKNTWRLIFR) lie on the Intravirion side of the membrane. A helical transmembrane segment spans residues 27-47 (IAILLLTVVTLATSVASLVYS). The Virion surface segment spans residues 48–577 (MGASTPSDLV…NDGVREARSG (530 aa)). The N-linked (GlcNAc...) asparagine; by host glycan is linked to N119. Residues 124-152 (GAPIHDPDFIGGIGKELIVDDASDVTSFY) are important for interaction with fusion/F protein. 3 disulfides stabilise this stretch: C172-C196, C186-C247, and C238-C251. The involved in neuraminidase activity stretch occupies residues 234–239 (NRKSCS). Residues N341 and N433 are each glycosylated (N-linked (GlcNAc...) asparagine; by host). 2 disulfides stabilise this stretch: C344/C461 and C455/C465. Residues N481 and N538 are each glycosylated (N-linked (GlcNAc...) asparagine; by host). An intrachain disulfide couples C531 to C542.

This sequence belongs to the paramyxoviruses hemagglutinin-neuraminidase family. As to quaternary structure, homotetramer; composed of disulfide-linked homodimers. Interacts with F protein trimer. Interacts with host CG-1B; this interaction inhibits viral adsorption and replication rather than internalization.

Its subcellular location is the virion membrane. The protein localises to the host cell membrane. The enzyme catalyses Hydrolysis of alpha-(2-&gt;3)-, alpha-(2-&gt;6)-, alpha-(2-&gt;8)- glycosidic linkages of terminal sialic acid residues in oligosaccharides, glycoproteins, glycolipids, colominic acid and synthetic substrates.. Its function is as follows. Mediates the viral entry into the host cell together with fusion/F protein. Attaches the virus to sialic acid-containing cell receptors and thereby initiates infection. Binding of HN protein to the receptor induces a conformational change that allows the F protein to trigger virion/cell membranes fusion. Neuraminidase activity ensures the efficient spread of the virus by dissociating the mature virions from the neuraminic acid containing glycoproteins. The chain is Hemagglutinin-neuraminidase (HN) from Gallus gallus (Chicken).